Consider the following 116-residue polypeptide: Somatostatin (116 aa).

The signal sequence occupies residues 1–24 (MLSCRLQCALAALCIVLALGGVTG). The propeptide occupies 35–88 (LQKSLAAATGKQELAKYFLAELLSEPNQTENDALEPEDLPQAAEQDEMRLELQR). At T43 the chain carries Threonine amide. C105 and C116 form a disulfide bridge.

Belongs to the somatostatin family. In terms of processing, C-terminal amidation of the neuronostatin peptide is required for its biological activity, including for the regulation of mean arterial pressure. In the pancreas, somatostatin is expressed in delta cells of the islets of Langerhans. In the stomach, it is expressed in parietal cells of oxyntic mucosa and in the small intestine, it is found in the villus (at protein level). Neuronostatin is expressed in the pancreas in delta cells of the islets of Langerhans, as well as in the stomach, in parietal cells of oxyntic mucosa and in the small intestine, in the villus (at protein level).

The protein resides in the secreted. Its function is as follows. Inhibits the secretion of pituitary hormones, including that of growth hormone/somatotropin (GH1), PRL, ACTH, luteinizing hormone (LH) and TSH. Also impairs ghrelin- and GnRH-stimulated secretion of GH1 and LH; the inhibition of ghrelin-stimulated secretion of GH1 can be further increased by neuronostatin. In terms of biological role, may enhance low-glucose-induced glucagon release by pancreatic alpha cells. This effect may be mediated by binding to GPR107 and PKA activation. May regulate cardiac contractile function. May compromise cardiomyocyte viability. In the central nervous system, may impair memory retention and may affect hippocampal excitability. May also have anxiolytic and anorexigenic effects. May play a role in arterial pressure regulation. May inhibit basal, but not ghrelin- or GnRH-stimulated secretion of GH1 or LH, but does not affect the release of other pituitary hormones, including PRL, ACTH, FSH or TSH. Potentiates inhibitory action of somatostatin on ghrelin-stimulated secretion of GH1, but not that on GnRH-stimulated secretion of LH. This is Somatostatin (Sst) from Mus musculus (Mouse).